The following is a 471-amino-acid chain: Glutamate--tRNA ligase (471 aa).

The 'HIGH' region signature appears at 9 to 19; that stretch reads PSPTGYLHVGG. Zn(2+) is bound by residues C98, C100, C125, and H127. The 'KMSKS' region motif lies at 237–241; that stretch reads KLSKR. Residue K240 coordinates ATP.

It belongs to the class-I aminoacyl-tRNA synthetase family. Glutamate--tRNA ligase type 1 subfamily. In terms of assembly, monomer. The cofactor is Zn(2+).

The protein resides in the cytoplasm. It carries out the reaction tRNA(Glu) + L-glutamate + ATP = L-glutamyl-tRNA(Glu) + AMP + diphosphate. Functionally, catalyzes the attachment of glutamate to tRNA(Glu) in a two-step reaction: glutamate is first activated by ATP to form Glu-AMP and then transferred to the acceptor end of tRNA(Glu). This Shigella boydii serotype 18 (strain CDC 3083-94 / BS512) protein is Glutamate--tRNA ligase.